A 100-amino-acid chain; its full sequence is UPF0213 protein YhbQ (100 aa).

In terms of domain architecture, GIY-YIG spans 2 to 77 (TPWFLYLIRT…KQLTKRQKER (76 aa)).

This sequence belongs to the UPF0213 family.

The polypeptide is UPF0213 protein YhbQ (Escherichia fergusonii (strain ATCC 35469 / DSM 13698 / CCUG 18766 / IAM 14443 / JCM 21226 / LMG 7866 / NBRC 102419 / NCTC 12128 / CDC 0568-73)).